The primary structure comprises 451 residues: Clusterin (451 aa).

An N-terminal signal peptide occupies residues 1–18; sequence MELPLLALLSLGLVCQGG. Intrachain disulfides connect Cys-98–Cys-314, Cys-109–Cys-306, Cys-112–Cys-303, Cys-117–Cys-296, and Cys-125–Cys-286. Residues Asn-99, Asn-141, Asn-278, Asn-355, Asn-375, and Asn-447 are each glycosylated (N-linked (GlcNAc...) asparagine).

This sequence belongs to the clusterin family. In terms of assembly, antiparallel disulfide-linked heterodimer of an alpha chain and a beta chain. Self-associates and forms higher oligomers. Interacts with a broad range of misfolded proteins. In terms of processing, proteolytically cleaved on its way through the secretory system, probably within the Golgi lumen. Polyubiquitinated, leading to proteasomal degradation.

The protein resides in the secreted. It localises to the cytoplasmic vesicle. It is found in the secretory vesicle. The protein localises to the chromaffin granule. Its subcellular location is the nucleus. The protein resides in the cytoplasm. It localises to the mitochondrion membrane. It is found in the cytosol. The protein localises to the endoplasmic reticulum. In terms of biological role, functions as extracellular chaperone that prevents aggregation of nonnative proteins. Prevents stress-induced aggregation of blood plasma proteins. Does not require ATP. Maintains partially unfolded proteins in a state appropriate for subsequent refolding by other chaperones, such as HSPA8/HSC70. Does not refold proteins by itself. Binding to cell surface receptors triggers internalization of the chaperone-client complex and subsequent lysosomal or proteasomal degradation. When secreted, protects cells against apoptosis and against cytolysis by complement: inhibits assembly of the complement membrane attack complex (MAC) by preventing polymerization of C9 pore component of the MAC complex. Intracellular forms interact with ubiquitin and SCF (SKP1-CUL1-F-box protein) E3 ubiquitin-protein ligase complexes and promote the ubiquitination and subsequent proteasomal degradation of target proteins. Modulates NF-kappa-B transcriptional activity. Promotes apoptosis when in the nucleus. Inhibits apoptosis when associated with the mitochondrial membrane by interference with BAX-dependent release of cytochrome c into the cytoplasm. Plays a role in the regulation of cell proliferation. The protein is Clusterin (CLU) of Coturnix japonica (Japanese quail).